A 320-amino-acid polypeptide reads, in one-letter code: MSVRSLRWPRQKAFLAVISLVVAVLLAVPGWLTPATAASQATVQFVAPTWAAERLNNKQLKILDVRTNPLAYIEGHLPGAVNIADAAYRGPNGFLPVQIWDPEKLASLFGRAGVSNNDTVLVYSDGNDVLGATLVAYLLERSGVQNIAVLDGGYKGYKDAGLPVTKEYPRYQAARFAPKDNRAFRVDIKQVEQLTGKSTFVDPRPPALFSGEQQVFIRNGHIPGARNIPWPTFTEANNANESLKNPHKLKPLSELKAILEAKGVTPDKDVIVTCSTGREASLQYLVLKHLLKYPKVRIYEGSWTEYSASNLPVETGPDRV.

An N-terminal signal peptide occupies residues 1–37; sequence MSVRSLRWPRQKAFLAVISLVVAVLLAVPGWLTPATA. 2 Rhodanese domains span residues 56–166 and 194–315; these read NNKQ…PVTK and LTGK…PVET. The Cysteine persulfide intermediate role is filled by Cys-274.

It is found in the periplasm. It catalyses the reaction thiosulfate + hydrogen cyanide = thiocyanate + sulfite + 2 H(+). In terms of biological role, may be a sulfotransferase involved in the transport of sulfate. Displays very low rhodanese activity. This chain is Putative thiosulfate sulfurtransferase (rhdA), found in Synechococcus elongatus (strain ATCC 33912 / PCC 7942 / FACHB-805) (Anacystis nidulans R2).